Here is a 372-residue protein sequence, read N- to C-terminus: Chorismate synthase (372 aa).

Residue Arg-48 coordinates NADP(+). Residues 131–133, 243–244, Gly-288, 303–307, and Arg-329 each bind FMN; these read RSS, NA, and KPTSS.

The protein belongs to the chorismate synthase family. In terms of assembly, homotetramer. Requires FMNH2 as cofactor.

The enzyme catalyses 5-O-(1-carboxyvinyl)-3-phosphoshikimate = chorismate + phosphate. It functions in the pathway metabolic intermediate biosynthesis; chorismate biosynthesis; chorismate from D-erythrose 4-phosphate and phosphoenolpyruvate: step 7/7. Catalyzes the anti-1,4-elimination of the C-3 phosphate and the C-6 proR hydrogen from 5-enolpyruvylshikimate-3-phosphate (EPSP) to yield chorismate, which is the branch point compound that serves as the starting substrate for the three terminal pathways of aromatic amino acid biosynthesis. This reaction introduces a second double bond into the aromatic ring system. This is Chorismate synthase from Caulobacter vibrioides (strain ATCC 19089 / CIP 103742 / CB 15) (Caulobacter crescentus).